Here is a 121-residue protein sequence, read N- to C-terminus: Non-structural protein 3a (121 aa).

Positions 1–39 (MMSMRSRRSMFIEHFNELMMRVQRPPTLLLILLVANAFS) are cleaved as a signal peptide.

The polypeptide is Non-structural protein 3a (Bat coronavirus HKU5 (BtCoV)).